We begin with the raw amino-acid sequence, 376 residues long: Mannosyl phosphorylinositol ceramide synthase CSH1 (376 aa).

Helical transmembrane passes span 7–27 (ILII…FDLL) and 274–294 (ILSC…GEFT). A disordered region spans residues 331–351 (NKEKRRNPTRHEYNSRGKRLR). S354 carries the phosphoserine modification.

This sequence belongs to the glycosyltransferase 32 family. In terms of assembly, heterodimer of CSH1 and CSG2.

The protein resides in the vacuole membrane. The enzyme catalyses a 1D-myo-inositol-1-phospho-N-[(R)-2-hydroxy-very-long-chain fatty acyl]-(R)-4-hydroxysphingoid base + GDP-alpha-D-mannose = an alpha-D-mannosyl-(1&lt;-&gt;6)-1D-myo-inositol-1-phospho-N-[(R)-2-hydroxy-very-long-chain fatty acyl]-(R)-4-hydroxysphingoid base + GDP + H(+). Involved in the synthesis of mannosyl phosphorylinositol ceramide. Catalyzes the addition of mannosyl to phosphorylinositol ceramide. This Saccharomyces cerevisiae (strain ATCC 204508 / S288c) (Baker's yeast) protein is Mannosyl phosphorylinositol ceramide synthase CSH1.